Here is a 155-residue protein sequence, read N- to C-terminus: Archaemetzincin (155 aa).

H109 is a Zn(2+) binding site. E110 serves as the catalytic Proton acceptor. 6 residues coordinate Zn(2+): H113, H119, C120, C125, C144, and C147.

It belongs to the peptidase M54 family. As to quaternary structure, monomer. Zn(2+) serves as cofactor.

In terms of biological role, probable zinc metalloprotease whose natural substrate is unknown. The protein is Archaemetzincin of Pyrobaculum aerophilum (strain ATCC 51768 / DSM 7523 / JCM 9630 / CIP 104966 / NBRC 100827 / IM2).